Reading from the N-terminus, the 370-residue chain is 4-hydroxy-3-methylbut-2-en-1-yl diphosphate synthase (flavodoxin) (370 aa).

4 residues coordinate [4Fe-4S] cluster: Cys-265, Cys-268, Cys-300, and Glu-307.

It belongs to the IspG family. The cofactor is [4Fe-4S] cluster.

The catalysed reaction is (2E)-4-hydroxy-3-methylbut-2-enyl diphosphate + oxidized [flavodoxin] + H2O + 2 H(+) = 2-C-methyl-D-erythritol 2,4-cyclic diphosphate + reduced [flavodoxin]. The protein operates within isoprenoid biosynthesis; isopentenyl diphosphate biosynthesis via DXP pathway; isopentenyl diphosphate from 1-deoxy-D-xylulose 5-phosphate: step 5/6. Functionally, converts 2C-methyl-D-erythritol 2,4-cyclodiphosphate (ME-2,4cPP) into 1-hydroxy-2-methyl-2-(E)-butenyl 4-diphosphate. The polypeptide is 4-hydroxy-3-methylbut-2-en-1-yl diphosphate synthase (flavodoxin) (Symbiobacterium thermophilum (strain DSM 24528 / JCM 14929 / IAM 14863 / T)).